The primary structure comprises 214 residues: Coiled-coil domain-containing protein 169 (214 aa).

A coiled-coil region spans residues 56 to 138; sequence SEWKTRYETQ…YAFRLEQESK (83 aa). A disordered region spans residues 154 to 214; the sequence is MTQVSGSNQV…RSNHLPKLNP (61 aa). Composition is skewed to polar residues over residues 155 to 166 and 185 to 195; these read TQVSGSNQVSKR and HNSMNQKTTNA.

This sequence belongs to the CCDC169 family.

This is Coiled-coil domain-containing protein 169 (Ccdc169) from Mus musculus (Mouse).